The following is a 149-amino-acid chain: Calmodulin (149 aa).

Alanine 2 carries the N-acetylalanine modification. EF-hand domains follow at residues 8-43 (EQIA…LGQN), 44-79 (PTEA…KMKD), 81-116 (DSEE…LGEK), and 117-149 (LSED…MMSK). Residues aspartate 21, aspartate 23, aspartate 25, threonine 27, glutamate 32, aspartate 57, aspartate 59, asparagine 61, threonine 63, glutamate 68, aspartate 94, aspartate 96, asparagine 98, tyrosine 100, glutamate 105, aspartate 130, aspartate 132, aspartate 134, glutamine 136, and glutamate 141 each coordinate Ca(2+).

The protein belongs to the calmodulin family.

Functionally, calmodulin mediates the control of a large number of enzymes, ion channels and other proteins by Ca(2+). Among the enzymes to be stimulated by the calmodulin-Ca(2+) complex are a number of protein kinases and phosphatases. The protein is Calmodulin (CMD1) of Blastocladiella emersonii (Aquatic fungus).